The primary structure comprises 750 residues: uncharacterized protein (750 aa).

The next 5 membrane-spanning stretches (helical) occupy residues 2–22 (FVLLMLALVMLFIVQSSTNVI), 33–53 (SLILIPLVTLLAGSITADIFI), 79–99 (LLVLLMYLSIVAVLSTAVVSL), 116–136 (LSIFVGTILNGIIFSAVTIML), and 143–163 (IQSLIILLLFVSLFSFSSPIA). Disordered regions lie at residues 385 to 461 (DNKG…KKKE) and 571 to 651 (NKEF…PLTA). Residues 398 to 411 (ENTKGDDNSSEKTD) show a composition bias toward basic and acidic residues. Residues 412–424 (TVSVSTKLKTTAD) are compositionally biased toward polar residues. Over residues 425–436 (QSESTQMSSEST) the composition is skewed to low complexity. A compositionally biased stretch (polar residues) spans 437–451 (ATGISSDPQSQGKMN). Residues 452–461 (NKSEEQKKKE) show a composition bias toward basic and acidic residues. Residues 618–629 (DSKGNTATNSDT) show a composition bias toward polar residues. A helical transmembrane segment spans residues 724-744 (ATIVITLFLTVVLLAIAFFFF).

This sequence to M.pneumoniae MPN_335.

It localises to the cell membrane. This is an uncharacterized protein from Mycoplasma pneumoniae (strain ATCC 29342 / M129 / Subtype 1) (Mycoplasmoides pneumoniae).